A 43-amino-acid polypeptide reads, in one-letter code: SPbeta prophage-derived uncharacterized protein YopG (43 aa).

This Bacillus subtilis (strain 168) protein is SPbeta prophage-derived uncharacterized protein YopG (yopG).